The primary structure comprises 491 residues: HEPACAM family member 2 (491 aa).

An N-terminal signal peptide occupies residues 1-18 (MWLRVFTAFLSFTAGACS). N73, N117, and N153 each carry an N-linked (GlcNAc...) asparagine glycan. 2 Ig-like C2-type domains span residues 137–221 (PVVQ…SDII) and 223–319 (PTIY…THFT). 2 cysteine pairs are disulfide-bonded: C158-C207 and C258-C303. Residue N308 is glycosylated (N-linked (GlcNAc...) asparagine). The helical transmembrane segment at 340-360 (LASITGISLFLIISMCLLFLW) threads the bilayer. Residues 361-491 (KKFQPYKVIK…GKHSRAKQCI (131 aa)) lie on the Cytoplasmic side of the membrane. Residues 444–454 (QQQDHPESSSQ) are compositionally biased toward polar residues. Disordered stretches follow at residues 444 to 466 (QQQD…DRHD) and 472 to 491 (ELGH…KQCI). Positions 472-482 (ELGHCKEQDKG) are enriched in basic and acidic residues.

Post-translationally, poly-ADP-ribosylated (PARsylated) by tankyrase TNKS during late G2 and prophase, leading to translocation to mitotic centrosomes. N-glycosylated.

Its subcellular location is the golgi apparatus membrane. It localises to the cytoplasm. The protein localises to the cytoskeleton. It is found in the spindle. The protein resides in the microtubule organizing center. Its subcellular location is the centrosome. It localises to the midbody. Required during prometaphase for centrosome maturation. Following poly-ADP-ribosylation (PARsylation) by TNKS, translocates from the Golgi apparatus to mitotic centrosomes and plays a key role in the formation of robust microtubules for prompt movement of chromosomes: anchors AKAP9/CG-NAP, a scaffold protein of the gamma-tubulin ring complex and promotes centrosome maturation. This Bos taurus (Bovine) protein is HEPACAM family member 2 (HEPACAM2).